Reading from the N-terminus, the 286-residue chain is UDP-3-O-acyl-N-acetylglucosamine deacetylase (286 aa).

The Zn(2+) site is built by H79, H237, and D241. The active-site Proton donor is H264.

The protein belongs to the LpxC family. It depends on Zn(2+) as a cofactor.

It carries out the reaction a UDP-3-O-[(3R)-3-hydroxyacyl]-N-acetyl-alpha-D-glucosamine + H2O = a UDP-3-O-[(3R)-3-hydroxyacyl]-alpha-D-glucosamine + acetate. It functions in the pathway glycolipid biosynthesis; lipid IV(A) biosynthesis; lipid IV(A) from (3R)-3-hydroxytetradecanoyl-[acyl-carrier-protein] and UDP-N-acetyl-alpha-D-glucosamine: step 2/6. Its function is as follows. Catalyzes the hydrolysis of UDP-3-O-myristoyl-N-acetylglucosamine to form UDP-3-O-myristoylglucosamine and acetate, the committed step in lipid A biosynthesis. In Chlamydia trachomatis serovar A (strain ATCC VR-571B / DSM 19440 / HAR-13), this protein is UDP-3-O-acyl-N-acetylglucosamine deacetylase.